Consider the following 134-residue polypeptide: Protein NrdI (134 aa).

This sequence belongs to the NrdI family.

Functionally, probably involved in ribonucleotide reductase function. The sequence is that of Protein NrdI from Serratia proteamaculans (strain 568).